The chain runs to 619 residues: DNA mismatch repair protein MutL (619 aa).

The interval 358 to 401 (GGNQFARPSEAREAATRFSITSSREPAASGGSSGGASWPHAQPG) is disordered.

This sequence belongs to the DNA mismatch repair MutL/HexB family.

Its function is as follows. This protein is involved in the repair of mismatches in DNA. It is required for dam-dependent methyl-directed DNA mismatch repair. May act as a 'molecular matchmaker', a protein that promotes the formation of a stable complex between two or more DNA-binding proteins in an ATP-dependent manner without itself being part of a final effector complex. In Klebsiella pneumoniae (strain 342), this protein is DNA mismatch repair protein MutL.